Consider the following 745-residue polypeptide: Eukaryotic translation initiation factor 3 subunit B (745 aa).

The RRM domain occupies 41-129 (DVIVIEGVPV…HRFSVHRFTD (89 aa)). 4 WD repeats span residues 189-230 (EHSR…RFMR), 251-293 (WSHE…RSFP), 303-344 (GQLK…LLEK), and 580-625 (GEHY…LQKH). Residues 644–745 (GKDEQKRVRK…IIEETEEVLA (102 aa)) are a coiled coil.

It belongs to the eIF-3 subunit B family. Component of the eukaryotic translation initiation factor 3 (eIF-3) complex.

The protein localises to the cytoplasm. Its function is as follows. RNA-binding component of the eukaryotic translation initiation factor 3 (eIF-3) complex, which is involved in protein synthesis of a specialized repertoire of mRNAs and, together with other initiation factors, stimulates binding of mRNA and methionyl-tRNAi to the 40S ribosome. The eIF-3 complex specifically targets and initiates translation of a subset of mRNAs involved in cell proliferation. The polypeptide is Eukaryotic translation initiation factor 3 subunit B (Mycosarcoma maydis (Corn smut fungus)).